Here is a 796-residue protein sequence, read N- to C-terminus: Lon protease (796 aa).

A Lon N-terminal domain is found at 19-213 (LPVVVTRGIF…LLKELIINRP (195 aa)). ATP is bound at residue 376-383 (GPPGVGKT). Residues 612–793 (ESQVGVVTGL…EDVYEIIFKN (182 aa)) form the Lon proteolytic domain. Residues Ser-699 and Lys-742 contribute to the active site.

It belongs to the peptidase S16 family. Homohexamer. Organized in a ring with a central cavity.

Its subcellular location is the cytoplasm. It carries out the reaction Hydrolysis of proteins in presence of ATP.. Functionally, ATP-dependent serine protease that mediates the selective degradation of mutant and abnormal proteins as well as certain short-lived regulatory proteins. Required for cellular homeostasis and for survival from DNA damage and developmental changes induced by stress. Degrades polypeptides processively to yield small peptide fragments that are 5 to 10 amino acids long. Binds to DNA in a double-stranded, site-specific manner. The chain is Lon protease from Mycoplasma mycoides subsp. mycoides SC (strain CCUG 32753 / NCTC 10114 / PG1).